The primary structure comprises 555 residues: CTP synthase (555 aa).

An amidoligase domain region spans residues 1-265 (MTRYIFITGG…GNRVCEKLNI (265 aa)). Ser13 provides a ligand contact to CTP. Ser13 contacts UTP. ATP-binding positions include 14-19 (SLGKGI) and Asp71. Residues Asp71 and Glu139 each contribute to the Mg(2+) site. CTP is bound by residues 146 to 148 (DIE), 186 to 191 (KTKPTQ), and Lys222. UTP-binding positions include 186–191 (KTKPTQ) and Lys222. One can recognise a Glutamine amidotransferase type-1 domain in the interval 290 to 541 (TVAVVGKYVD…IKAGLAAKEA (252 aa)). Residue Gly351 participates in L-glutamine binding. The active-site Nucleophile; for glutamine hydrolysis is Cys378. L-glutamine is bound by residues 379–382 (LGMQ), Glu402, and Arg469. Active-site residues include His514 and Glu516.

The protein belongs to the CTP synthase family. Homotetramer.

The enzyme catalyses UTP + L-glutamine + ATP + H2O = CTP + L-glutamate + ADP + phosphate + 2 H(+). The catalysed reaction is L-glutamine + H2O = L-glutamate + NH4(+). It carries out the reaction UTP + NH4(+) + ATP = CTP + ADP + phosphate + 2 H(+). It functions in the pathway pyrimidine metabolism; CTP biosynthesis via de novo pathway; CTP from UDP: step 2/2. Its activity is regulated as follows. Allosterically activated by GTP, when glutamine is the substrate; GTP has no effect on the reaction when ammonia is the substrate. The allosteric effector GTP functions by stabilizing the protein conformation that binds the tetrahedral intermediate(s) formed during glutamine hydrolysis. Inhibited by the product CTP, via allosteric rather than competitive inhibition. Functionally, catalyzes the ATP-dependent amination of UTP to CTP with either L-glutamine or ammonia as the source of nitrogen. Regulates intracellular CTP levels through interactions with the four ribonucleotide triphosphates. The sequence is that of CTP synthase from Coxiella burnetii (strain Dugway 5J108-111).